A 3391-amino-acid polypeptide reads, in one-letter code: Genome polyprotein (3391 aa).

The interaction with host EXOC1 stretch occupies residues Met1 to Met15. Topologically, residues Met1–Thr101 are cytoplasmic. Residues Met37–Ile72 are hydrophobic; homodimerization of capsid protein C. A propeptide spans Thr101–Ala114 (ER anchor for the capsid protein C, removed in mature form by serine protease NS3). A helical membrane pass occupies residues Ala102 to Gly122. Over Glu123–Glu238 the chain is Extracellular. Asn183 is a glycosylation site (N-linked (GlcNAc...) asparagine; by host). The chain crosses the membrane as a helical span at residues Thr239–Gly259. The Cytoplasmic segment spans residues Thr260–Arg265. Residues Ala266–Thr280 traverse the membrane as a helical segment. Residues Met281–Gly725 are Extracellular-facing. Intrachain disulfides connect Cys283–Cys310, Cys340–Cys401, Cys354–Cys385, and Cys372–Cys396. Asn347 carries N-linked (GlcNAc...) asparagine; by host glycosylation. The interval Asp378 to Gly391 is fusion peptide. A glycan (N-linked (GlcNAc...) asparagine; by host) is linked at Asn433. Cystine bridges form between Cys465–Cys565 and Cys582–Cys613. A helical membrane pass occupies residues Ala726–Ile746. Residues Gly747–Ser752 lie on the Cytoplasmic side of the membrane. The helical transmembrane segment at Thr753–Val773 threads the bilayer. Over Gln774–Ile1195 the chain is Extracellular. 6 disulfide bridges follow: Cys779/Cys790, Cys830/Cys918, Cys954/Cys998, Cys1055/Cys1104, Cys1066/Cys1088, and Cys1087/Cys1091. 2 N-linked (GlcNAc...) asparagine; by host glycosylation sites follow: Asn905 and Asn982. Residues Gly1196–Leu1220 form a helical membrane-spanning segment. The Cytoplasmic portion of the chain corresponds to Arg1221–Lys1226. The helical transmembrane segment at Glu1227–Glu1245 threads the bilayer. Over Thr1246–Lys1269 the chain is Lumenal. The helical transmembrane segment at Tyr1270–Asn1290 threads the bilayer. Ala1291 is a topological domain (cytoplasmic). Residues Trp1292 to Thr1310 traverse the membrane as a helical segment. The Lumenal portion of the chain corresponds to Ser1311–Asp1317. Residues Trp1318 to Leu1338 form a helical membrane-spanning segment. At Ser1339–Ser1346 the chain is on the cytoplasmic side. The chain crosses the membrane as a helical span at residues Trp1347–Leu1367. The Lumenal segment spans residues Lys1368–Asp1370. The chain crosses the membrane as a helical span at residues Ile1371 to Gly1391. Over Arg1392 to Gly1447 the chain is Cytoplasmic. Residues Leu1398–Glu1437 are interacts with and activates NS3 protease. An intramembrane region (helical) is located at residues Leu1448 to Leu1468. Over Trp1469–Thr2147 the chain is Cytoplasmic. The region spanning Ala1476–Ile1653 is the Peptidase S7 domain. Residues His1526, Asp1550, and Ser1610 each act as charge relay system; for serine protease NS3 activity in the active site. Positions Asp1655–Glu1811 constitute a Helicase ATP-binding domain. An important for RNA-binding region spans residues Arg1659–Lys1662. Leu1668–Thr1675 serves as a coordination point for ATP. The DEAH box motif lies at Asp1759–His1762. The region spanning Ser1821 to Arg1988 is the Helicase C-terminal domain. Position 1863 is an N6-acetyllysine; by host (Lys1863). Residues Leu2148 to Gly2168 form a helical membrane-spanning segment. Over Arg2169 to Gly2170 the chain is Lumenal. Residues Ile2171–Ala2191 constitute an intramembrane region (helical). Position 2192 (Gln2192) is a topological domain, lumenal. The helical transmembrane segment at Ile2193–Ile2213 threads the bilayer. Over Pro2214 to Thr2228 the chain is Cytoplasmic. Residues Tyr2229–Leu2249 traverse the membrane as a helical segment. Over Glu2250–Asp2274 the chain is Lumenal. The helical intramembrane region spans Leu2275–Leu2295. The Lumenal portion of the chain corresponds to Arg2296–Thr2316. Residues Asn2301 and Asn2305 are each glycosylated (N-linked (GlcNAc...) asparagine; by host). An intramembrane region (helical) is located at residues Val2317–Leu2337. The Lumenal portion of the chain corresponds to Ala2338 to Pro2347. Residues Ile2348 to Leu2368 traverse the membrane as a helical segment. At Gln2369–Gln2413 the chain is on the cytoplasmic side. The chain crosses the membrane as a helical span at residues Val2414–Cys2434. The Lumenal portion of the chain corresponds to Glu2435 to Thr2459. The N-linked (GlcNAc...) asparagine; by host glycan is linked to Asn2457. A helical transmembrane segment spans residues Ile2460–Phe2480. Over Ser2481–Trp3391 the chain is Cytoplasmic. The mRNA cap 0-1 NS5-type MT domain occupies Thr2493–Asn2755. Ser2547 serves as a coordination point for S-adenosyl-L-methionine. Ser2547 bears the Phosphoserine mark. The active-site For 2'-O-MTase activity is Lys2552. Positions Val2568–Leu2571 match the SUMO-interacting motif motif. S-adenosyl-L-methionine-binding residues include Gly2577, Trp2578, Thr2595, Lys2596, Asp2622, and Val2623. Catalysis depends on Asp2637, which acts as the For 2'-O-MTase activity. Ile2638 contacts S-adenosyl-L-methionine. Catalysis depends on for 2'-O-MTase activity residues Lys2672 and Glu2708. Tyr2710 contacts S-adenosyl-L-methionine. Positions 2929, 2933, 2938, and 2941 each coordinate Zn(2+). The 150-residue stretch at Gly3019–Ala3168 folds into the RdRp catalytic domain. Zn(2+) is bound by residues His3203, Cys3219, and Cys3338.

In the N-terminal section; belongs to the class I-like SAM-binding methyltransferase superfamily. mRNA cap 0-1 NS5-type methyltransferase family. As to quaternary structure, homodimer. Interacts (via N-terminus) with host EXOC1 (via C-terminus); this interaction results in EXOC1 degradation through the proteasome degradation pathway. In terms of assembly, forms heterodimers with envelope protein E in the endoplasmic reticulum and Golgi. Homodimer; in the endoplasmic reticulum and Golgi. Interacts with protein prM. Interacts with non-structural protein 1. As to quaternary structure, homodimer; Homohexamer when secreted. Interacts with envelope protein E. Interacts with host PRKAA1. In terms of assembly, interacts (via N-terminus) with serine protease NS3. Forms a heterodimer with serine protease NS3. May form homooligomers. As to quaternary structure, forms a heterodimer with NS2B. Interacts with NS4B. Interacts with unphosphorylated RNA-directed RNA polymerase NS5; this interaction stimulates RNA-directed RNA polymerase NS5 guanylyltransferase activity. Interacts with host SHFL. In terms of assembly, interacts with host MAVS; this interaction inhibits the synthesis of IFN-beta. Interacts with host MAVS; this interaction inhibits the synthesis of IFN-beta. Interacts with host SHFL. Interacts with host AUP1; the interaction occurs in the presence of Dengue virus NS4B and induces lipophagy which facilitates production of virus progeny particles. May interact with host SRPRA and SEC61G. Interacts with serine protease NS. As to quaternary structure, homodimer. Interacts with host STAT2; this interaction inhibits the phosphorylation of the latter, and, when all viral proteins are present (polyprotein), targets STAT2 for degradation. Interacts with serine protease NS3. Interacts with host PAF1 complex; the interaction may prevent the recruitment of the PAF1 complex to interferon-responsive genes, and thus reduces the immune response. In terms of processing, specific enzymatic cleavages in vivo yield mature proteins. Cleavages in the lumen of endoplasmic reticulum are performed by host signal peptidase, whereas cleavages in the cytoplasmic side are performed by serine protease NS3. Signal cleavage at the 2K-4B site requires a prior NS3 protease-mediated cleavage at the 4A-2K site. Cleaved in post-Golgi vesicles by a host furin, releasing the mature small envelope protein M, and peptide pr. This cleavage is incomplete as up to 30% of viral particles still carry uncleaved prM. Post-translationally, N-glycosylated. In terms of processing, N-glycosylated. The excreted form is glycosylated and this is required for efficient secretion of the protein from infected cells. Acetylated by host KAT5. Acetylation modulates NS3 RNA-binding and unwinding activities and plays an important positive role for viral replication. Post-translationally, sumoylation of RNA-directed RNA polymerase NS5 increases NS5 protein stability allowing proper viral RNA replication. In terms of processing, phosphorylated on serines residues. This phosphorylation may trigger NS5 nuclear localization.

It is found in the virion. It localises to the host nucleus. The protein localises to the host cytoplasm. The protein resides in the host perinuclear region. Its subcellular location is the secreted. It is found in the virion membrane. It localises to the host endoplasmic reticulum membrane. The protein localises to the host mitochondrion. It catalyses the reaction Selective hydrolysis of -Xaa-Xaa-|-Yaa- bonds in which each of the Xaa can be either Arg or Lys and Yaa can be either Ser or Ala.. The enzyme catalyses RNA(n) + a ribonucleoside 5'-triphosphate = RNA(n+1) + diphosphate. The catalysed reaction is a ribonucleoside 5'-triphosphate + H2O = a ribonucleoside 5'-diphosphate + phosphate + H(+). It carries out the reaction ATP + H2O = ADP + phosphate + H(+). It catalyses the reaction a 5'-end (5'-triphosphoguanosine)-ribonucleoside in mRNA + S-adenosyl-L-methionine = a 5'-end (N(7)-methyl 5'-triphosphoguanosine)-ribonucleoside in mRNA + S-adenosyl-L-homocysteine. The enzyme catalyses a 5'-end (N(7)-methyl 5'-triphosphoguanosine)-ribonucleoside in mRNA + S-adenosyl-L-methionine = a 5'-end (N(7)-methyl 5'-triphosphoguanosine)-(2'-O-methyl-ribonucleoside) in mRNA + S-adenosyl-L-homocysteine + H(+). Its function is as follows. Plays a role in virus budding by binding to the cell membrane and gathering the viral RNA into a nucleocapsid that forms the core of a mature virus particle. During virus entry, may induce genome penetration into the host cytoplasm after hemifusion induced by the surface proteins. Can migrate to the cell nucleus where it modulates host functions. Overcomes the anti-viral effects of host EXOC1 by sequestering and degrading the latter through the proteasome degradation pathway. Inhibits RNA silencing by interfering with host Dicer. Functionally, prevents premature fusion activity of envelope proteins in trans-Golgi by binding to envelope protein E at pH6.0. After virion release in extracellular space, gets dissociated from E dimers. In terms of biological role, acts as a chaperone for envelope protein E during intracellular virion assembly by masking and inactivating envelope protein E fusion peptide. prM is the only viral peptide matured by host furin in the trans-Golgi network probably to avoid catastrophic activation of the viral fusion activity in acidic Golgi compartment prior to virion release. prM-E cleavage is inefficient, and many virions are only partially matured. These uncleaved prM would play a role in immune evasion. Its function is as follows. May play a role in virus budding. Exerts cytotoxic effects by activating a mitochondrial apoptotic pathway through M ectodomain. May display a viroporin activity. Binds to host cell surface receptor and mediates fusion between viral and cellular membranes. Envelope protein is synthesized in the endoplasmic reticulum in the form of heterodimer with protein prM. They play a role in virion budding in the ER, and the newly formed immature particle is covered with 60 spikes composed of heterodimer between precursor prM and envelope protein E. The virion is transported to the Golgi apparatus where the low pH causes dissociation of PrM-E heterodimers and formation of E homodimers. prM-E cleavage is inefficient, and many virions are only partially matured. These uncleaved prM would play a role in immune evasion. Functionally, involved in immune evasion, pathogenesis and viral replication. Once cleaved off the polyprotein, is targeted to three destinations: the viral replication cycle, the plasma membrane and the extracellular compartment. Essential for viral replication. Required for formation of the replication complex and recruitment of other non-structural proteins to the ER-derived membrane structures. Excreted as a hexameric lipoparticle that plays a role against host immune response. Antagonizing the complement function. Binds to the host macrophages and dendritic cells. Inhibits signal transduction originating from Toll-like receptor 3 (TLR3). Mediates complement activation, which may contribute to the pathogenesis of the vascular leakage that occurs in severe dengue disease. Activates autophagy through the AMPK/ERK/mTOR signaling pathway. Mechanistically, acts as the assembly platform for STK11-AMPK interactions and promotes STK11-AMPK interactions. In turn, promotes phosphorylation of the AMPK kinase structural domain and activates AMPK, thereby positively regulating the AMPK/ERK/mTOR signaling pathway and inducing autophagy. In terms of biological role, disrupts the host endothelial glycocalyx layer of host pulmonary microvascular endothelial cells, inducing degradation of sialic acid and shedding of heparan sulfate proteoglycans. NS1 induces expression of sialidases, heparanase, and activates cathepsin L, which activates heparanase via enzymatic cleavage. These effects are probably linked to the endothelial hyperpermeability observed in severe dengue disease. Its function is as follows. Component of the viral RNA replication complex that functions in virion assembly and antagonizes the host immune response. Required cofactor for the serine protease function of NS3. May have membrane-destabilizing activity and form viroporins. Functionally, displays three enzymatic activities: serine protease, NTPase and RNA helicase. NS3 serine protease, in association with NS2B, performs its autocleavage and cleaves the polyprotein at dibasic sites in the cytoplasm: C-prM, NS2A-NS2B, NS2B-NS3, NS3-NS4A, NS4A-2K and NS4B-NS5. NS3 RNA helicase binds RNA and unwinds dsRNA in the 3' to 5' direction. In terms of biological role, regulates the ATPase activity of the NS3 helicase activity. NS4A allows NS3 helicase to conserve energy during unwinding. Plays a role in the inhibition of the host innate immune response. Interacts with host MAVS and thereby prevents the interaction between RIGI and MAVS. In turn, IFN-beta production is impaired. Interacts with host AUP1 which mediates induction of lipophagy in host cells and facilitates production of virus progeny particles. Its function is as follows. Functions as a signal peptide for NS4B and is required for the interferon antagonism activity of the latter. Induces the formation of ER-derived membrane vesicles where the viral replication takes place. Inhibits interferon (IFN)-induced host STAT1 phosphorylation and nuclear translocation, thereby preventing the establishment of cellular antiviral state by blocking the IFN-alpha/beta pathway. Functionally, replicates the viral (+) and (-) RNA genome, and performs the capping of genomes in the cytoplasm. NS5 methylates viral RNA cap at guanine N-7 and ribose 2'-O positions. Besides its role in RNA genome replication, also prevents the establishment of cellular antiviral state by blocking the interferon-alpha/beta (IFN-alpha/beta) signaling pathway. Inhibits host TYK2 and STAT2 phosphorylation, thereby preventing activation of JAK-STAT signaling pathway. May reduce immune responses by preventing the recruitment of the host PAF1 complex to interferon-responsive genes. The sequence is that of Genome polyprotein from Aedimorphus (Red guenon).